The primary structure comprises 567 residues: Probable transport protein (567 aa).

A compositionally biased stretch (basic and acidic residues) spans 1–30 (MSDRVEVNERRSDSVSEKEPARDDARKDVT). Residues 1 to 38 (MSDRVEVNERRSDSVSEKEPARDDARKDVTDDQEDAPP) are disordered. Topologically, residues 1–46 (MSDRVEVNERRSDSVSEKEPARDDARKDVTDDQEDAPPFMTANNAR) are cytoplasmic. Residues 47–67 (VMLVQAIGGSLNGYSIGFVGV) traverse the membrane as a helical segment. Over 68–160 (YSTLFGYSTN…PSGYSSSESG (93 aa)) the chain is Extracellular. The helical transmembrane segment at 161–181 (IFAGSMIAGCLIGSVFAGPLA) threads the bilayer. The Cytoplasmic segment spans residues 182–189 (SKIGARLS). The helical transmembrane segment at 190–210 (FLLVGLVGVVASVMYHASCAA) threads the bilayer. Residues 211–212 (DE) are Extracellular-facing. Residues 213-233 (FWVLIVGRFVIGLFLGVICVA) form a helical membrane-spanning segment. Topologically, residues 234 to 249 (CPVYTDQNAHPKWKRT) are cytoplasmic. A helical transmembrane segment spans residues 250 to 270 (IGVMFQVFTTLGIFVAALMGL). Topologically, residues 271 to 289 (ALGQSIRFDHDGDQKVMAR) are extracellular. A helical membrane pass occupies residues 290–310 (MQGLCVFSTLFSLLTVVLGIV). Residues 311–341 (TRESRAKFDGGEEGRAELNPSEYGYVEMIPR) lie on the Cytoplasmic side of the membrane. Residues 342–362 (LLMGCVMAGTLQLTGINAVMN) traverse the membrane as a helical segment. Over 363–366 (YAPT) the chain is Extracellular. Residues 367-387 (IMGSLGLAPLVGNFVVMLWNF) traverse the membrane as a helical segment. Residues 388–404 (VTTLASIPLSYVFTMRH) are Cytoplasmic-facing. Residues 405 to 425 (VFLFGSIFTSCMCLFMCGIPV) traverse the membrane as a helical segment. The Extracellular portion of the chain corresponds to 426–437 (YPGVSKKLEAKN). Residues 438–458 (GVAITGILLFILGFEVCVGPC) traverse the membrane as a helical segment. Over 459-480 (YYVLTQDMFPPSFRPRGASFTQ) the chain is Cytoplasmic. The chain crosses the membrane as a helical span at residues 481-501 (VAQFIFNLIINVCYPIATESI). At 502–514 (SGGPSGNQDKGQA) the chain is on the extracellular side. The chain crosses the membrane as a helical span at residues 515–535 (VAFIFFGGLGLICFVIQVFFL). The Cytoplasmic portion of the chain corresponds to 536 to 567 (HPWDEERDGKKVVAPAIGKKELSEESIGNRAE).

This sequence belongs to the major facilitator superfamily. Sugar transporter (TC 2.A.1.1) family.

It localises to the membrane. Functionally, probable membrane transport protein. The polypeptide is Probable transport protein (PRO-1) (Leishmania enriettii).